Reading from the N-terminus, the 434-residue chain is CBL-interacting protein kinase 15 (434 aa).

The Protein kinase domain occupies 12–267 (YELGRLLGKG…IQKIKESTWF (256 aa)). ATP contacts are provided by residues 18-26 (LGKGTFGKV) and lysine 41. Aspartate 135 (proton acceptor) is an active-site residue. The tract at residues 153-182 (DFGLSALSESKRQDGLLHTTCGTPAYVAPE) is activation loop. An NAF domain is found at 298–333 (RKKNAHEDVKPMSVTNLNAFEIISFSKGFDLSGMFI). The PPI stretch occupies residues 338–367 (RNEARFTSDKSASTIISKLEDVAKALNLRV).

The protein belongs to the protein kinase superfamily. CAMK Ser/Thr protein kinase family. SNF1 subfamily. The cofactor is Mn(2+).

The catalysed reaction is L-seryl-[protein] + ATP = O-phospho-L-seryl-[protein] + ADP + H(+). It carries out the reaction L-threonyl-[protein] + ATP = O-phospho-L-threonyl-[protein] + ADP + H(+). Functionally, involved in salt stress tolerance. CIPK serine-threonine protein kinases interact with CBL proteins. Binding of a CBL protein to the regulatory NAF domain of CIPK protein lead to the activation of the kinase in a calcium-dependent manner. This Oryza sativa subsp. japonica (Rice) protein is CBL-interacting protein kinase 15 (CIPK15).